Consider the following 781-residue polypeptide: Homeobox protein SIX4 (781 aa).

The segment covering 1 to 10 (MSSSSPTGQI) has biased composition (polar residues). 2 disordered regions span residues 1–55 (MSSS…PLEP) and 270–321 (WFKN…GITN). Position 2 is an N-acetylserine (Ser-2). The homeobox DNA-binding region spans 223–282 (GEETVYCFKEKSRNALKELYKQNRYPSPAEKRHLAKITGLSLTQVSNWFKNRRQRDRNPS). 2 stretches are compositionally biased toward basic and acidic residues: residues 278–290 (DRNPSETQSKSES) and 299–308 (ESSKGHEDLS). Ser-640 carries the phosphoserine modification.

The protein belongs to the SIX/Sine oculis homeobox family. In terms of assembly, interacts with EYA3; acts cooperatively with EYA3 to transactivate target genes through interaction and nuclear translocation of EYA3 protein.

The protein resides in the nucleus. The protein localises to the cytoplasm. In terms of biological role, transcriptional regulator which can act as both a transcriptional repressor and activator by binding a DNA sequence on these target genes and is involved in processes like cell differentiation, cell migration and cell survival. Transactivates gene expression by binding a 5'-[CAT]A[CT][CT][CTG]GA[GAT]-3' motif present in the Trex site and a 5'-TCA[AG][AG]TTNC-3' motif present in the MEF3 site of the muscle-specific genes enhancer. Acts cooperatively with EYA proteins to transactivate their target genes through interaction and nuclear translocation of EYA protein. Acts synergistically with SIX1 to regulate target genes involved in formation of various organs, including muscle, kidney, gonad, ganglia, olfactory epithelium and cranial skeleton. Plays a role in several important steps of muscle development. Controls the genesis of hypaxial myogenic progenitors in the dermomyotome by transactivating PAX3 and the delamination and migration of the hypaxial precursors from the ventral lip to the limb buds through the transactivation of PAX3, MET and LBX1. Controls myoblast determination by transactivating MYF5, MYOD1 and MYF6. Controls somitic differentiation in myocyte through MYOG transactivation. Plays a role in synaptogenesis and sarcomere organization by participating in myofiber specialization during embryogenesis by activating fast muscle program in the primary myotome resulting in an up-regulation of fast muscle genes, including ATP2A1, MYL1 and TNNT3. Simultaneously, is also able to activate inhibitors of slow muscle genes, such as SOX6, HRASLS, and HDAC4, thereby restricting the activation of the slow muscle genes. During muscle regeneration, negatively regulates differentiation of muscle satellite cells through down-regulation of MYOG expression. During kidney development regulates the early stages of metanephros development and ureteric bud formation through regulation of GDNF, SALL1, PAX8 and PAX2 expression. Plays a role in gonad development by regulating both testis determination and size determination. In gonadal sex determination, transactivates ZFPM2 by binding a MEF3 consensus sequence, resulting in SRY up-regulation. In gonadal size determination, transactivates NR5A1 by binding a MEF3 consensus sequence resulting in gonadal precursor cell formation regulation. During olfactory development mediates the specification and patterning of olfactory placode through fibroblast growth factor and BMP4 signaling pathways and also regulates epithelial cell proliferation during placode formation. Promotes survival of sensory neurons during early trigeminal gangliogenesis. In the developing dorsal root ganglia, up-regulates SLC12A2 transcription. Regulates early thymus/parathyroid organogenesis through regulation of GCM2 and FOXN1 expression. Forms gustatory papillae during development of the tongue. Also plays a role during embryonic cranial skeleton morphogenesis. In Homo sapiens (Human), this protein is Homeobox protein SIX4 (SIX4).